A 244-amino-acid polypeptide reads, in one-letter code: Flavin-dependent thymidylate synthase (244 aa).

The region spanning 2–207 (VRVTLVNYTR…ELRPIIKWAK (206 aa)) is the ThyX domain. FAD-binding positions include Ser-56, 80–82 (RHR), and Gln-88. DUMP-binding positions include 77–80 (QLVR), 88–92 (QQSQR), and Arg-146. A ThyX motif motif is present at residues 80-90 (RHRIASYTQQS). FAD-binding positions include 162–164 (NLR) and His-168. Residue Arg-173 coordinates dUMP. Residue Arg-173 is the Involved in ionization of N3 of dUMP, leading to its activation of the active site.

This sequence belongs to the thymidylate synthase ThyX family. Homotetramer. FAD serves as cofactor.

The enzyme catalyses dUMP + (6R)-5,10-methylene-5,6,7,8-tetrahydrofolate + NADPH + H(+) = dTMP + (6S)-5,6,7,8-tetrahydrofolate + NADP(+). It participates in pyrimidine metabolism; dTTP biosynthesis. In terms of biological role, catalyzes the reductive methylation of 2'-deoxyuridine-5'-monophosphate (dUMP) to 2'-deoxythymidine-5'-monophosphate (dTMP) while utilizing 5,10-methylenetetrahydrofolate (mTHF) as the methyl donor, and NADPH and FADH(2) as the reductant. This is Flavin-dependent thymidylate synthase from Pyrococcus abyssi (strain GE5 / Orsay).